Reading from the N-terminus, the 350-residue chain is Protein RecA (350 aa).

Residue 65–72 (GPESSGKT) coordinates ATP.

It belongs to the RecA family.

The protein resides in the cytoplasm. Functionally, can catalyze the hydrolysis of ATP in the presence of single-stranded DNA, the ATP-dependent uptake of single-stranded DNA by duplex DNA, and the ATP-dependent hybridization of homologous single-stranded DNAs. It interacts with LexA causing its activation and leading to its autocatalytic cleavage. This Clostridium tetani (strain Massachusetts / E88) protein is Protein RecA.